A 639-amino-acid chain; its full sequence is MGKIIGIDLGTTNSCVAVLDGGKARVLENAEGDRTTPSIIAYTDDETIVGQPAKRQAVTNPNNTFFAIKRLIGRRFKDDEVQRDVNIMPFKIIAADNGDAWVESRGNKMAPPQVSAEILKKMKKTAEDFLGEEVTEAVITVPAYFNDSQRQATKDAGRIAGLEVKRIINEPTAAALAYGIDKKQGDNIVAVYDLGGGTFDISIIEIDSNDGDQTFEVLATNGDTHLGGEDFDNRLINYLADEFKKEQGLDLRKDPLAMQRLKEAAEKAKIELSSTNQTEVNLPYITADATGPKHLVVKITRAKLESLVEDLIIRTLEPLKVALADADLSVSDINEVILVGGQTRMPKVQEAVTNFFGKEPRKDVNPDEAVAVGAAIQAGVLSGDVKDVLLLDVTPLSLGIETMGSVMTKLIEKNTTIPTKAQQVFSTADDNQSAVTIHVLQGERKQASANKSLGQFNLDGIEPAPRGMPQIEVMFDIDADGILHVSATDKKTGKKQNITIKASSGLSEEEVAQMVRDAEAHAEEDKKFEELVQSRNQADGLVHATKKQVEEAGDALPSEDKAKIEAAMSAVETAVKGNDKEAIEKATQALIEASAKLMEIAQAKAQTQGGAQEGAAKQSNATADDVVDAEFEEVKDDKK.

A Phosphothreonine; by autocatalysis modification is found at Thr-198. Low complexity predominate over residues 603 to 618; the sequence is AKAQTQGGAQEGAAKQ. A disordered region spans residues 603–639; the sequence is AKAQTQGGAQEGAAKQSNATADDVVDAEFEEVKDDKK. Acidic residues predominate over residues 625–639; it reads DVVDAEFEEVKDDKK.

It belongs to the heat shock protein 70 family.

In terms of biological role, acts as a chaperone. In Shewanella oneidensis (strain ATCC 700550 / JCM 31522 / CIP 106686 / LMG 19005 / NCIMB 14063 / MR-1), this protein is Chaperone protein DnaK.